Here is a 360-residue protein sequence, read N- to C-terminus: Homeobox protein ceh-60 (360 aa).

Residues 1-82 are PBC-A; sequence MDNLIKQLQM…ENPTFPLEEV (82 aa). Residues 1–179 enclose the PBC domain; it reads MDNLIKQLQM…ILVLRREIEQ (179 aa). Residues 85-179 are PBC-B; the sequence is EKDEEWQPLE…ILVLRREIEQ (95 aa). The segment at residues 180–242 is a DNA-binding region (homeobox); sequence QGRKRRNFDK…NQRIRTKQQA (63 aa).

It belongs to the TALE/PBX homeobox family. Forms a heterodimer with homeobox unc-62. Interacts with pqm-1.

It is found in the nucleus. In terms of biological role, probable transcription regulator which binds to DNA, repressing genes involved in longevity and stress, while activating genes involved in reproduction, such as the vitellogenins. Associates with homeobox unc-62 to regulate gene expression, including repression of genes involved in innate immunity. Required for intestinal expression of vitellogenin genes. Negatively modulates longevity, probably independently of effects on vitellogenesis. Involved in lipid homeostasis, contributing to the reallocation of intestinal lipids to the germline and to the formation of the cuticle. Associates with transcriptional regulator pqm-1 at the daf-16 associated element within the promoters of stress-responsive genes to regulate expression. This Caenorhabditis elegans protein is Homeobox protein ceh-60.